The chain runs to 458 residues: UDP-N-acetylmuramate--L-alanine ligase (458 aa).

Residue 112-118 coordinates ATP; sequence GTHGKTT.

Belongs to the MurCDEF family.

The protein localises to the cytoplasm. The catalysed reaction is UDP-N-acetyl-alpha-D-muramate + L-alanine + ATP = UDP-N-acetyl-alpha-D-muramoyl-L-alanine + ADP + phosphate + H(+). Its pathway is cell wall biogenesis; peptidoglycan biosynthesis. Cell wall formation. In Geotalea daltonii (strain DSM 22248 / JCM 15807 / FRC-32) (Geobacter daltonii), this protein is UDP-N-acetylmuramate--L-alanine ligase.